We begin with the raw amino-acid sequence, 207 residues long: Vascular endothelial growth factor B (207 aa).

A signal peptide spans 1–21 (MSPLLRRLLLVALLQLARTQA). 3 disulfides stabilise this stretch: Cys47–Cys89, Cys78–Cys122, and Cys82–Cys124. Positions 129 to 139 (KESAVKPDRVA) are enriched in basic and acidic residues. Positions 129–178 (KESAVKPDRVAIPHHRPQPRSVPGWDSTPGASSPADIIHPTPAPGSSARL) are disordered.

It belongs to the PDGF/VEGF growth factor family. As to quaternary structure, homodimer; disulfide-linked. Can also form heterodimer with VEGF. In terms of processing, VEGF-B186 is O-glycosylated. As to expression, abundantly expressed in heart, brain, kidney and skeletal muscle.

It is found in the secreted. Functionally, growth factor for endothelial cells. VEGF-B167 binds heparin and neuropilin-1 whereas the binding to neuropilin-1 of VEGF-B186 is regulated by proteolysis. VEGF-B seems to be required for normal heart function in adult but is not required for proper development of the cardiovascular system either during development or for angiogenesis in adults. In Mus musculus (Mouse), this protein is Vascular endothelial growth factor B (Vegfb).